The following is a 77-amino-acid chain: MEKLTILLLVAALLMSTQGLIQSGGENRPKEKIKFLSKRKTVAESWWEGECLGWSNYCTSHSICCSGECILSYCDIW.

An N-terminal signal peptide occupies residues 1–19 (MEKLTILLLVAALLMSTQG). Residues 20–49 (LIQSGGENRPKEKIKFLSKRKTVAESWWEG) constitute a propeptide that is removed on maturation. Cystine bridges form between Cys-51-Cys-65, Cys-58-Cys-69, and Cys-64-Cys-74.

The protein belongs to the conotoxin O2 superfamily. Expressed by the venom duct.

The protein localises to the secreted. The sequence is that of Conotoxin Lt7.1 from Conus litteratus (Lettered cone).